Consider the following 141-residue polypeptide: Hemoglobin subunit alpha-A (141 aa).

Residues 1–141 (VLSANDKTNV…VGNVLSAKYR (141 aa)) form the Globin domain. Position 58 (His-58) interacts with O2. His-87 contacts heme b.

The protein belongs to the globin family. In terms of assembly, heterotetramer of two alpha chains and two beta chains. As to expression, red blood cells.

In terms of biological role, involved in oxygen transport from the lung to the various peripheral tissues. This chain is Hemoglobin subunit alpha-A (HBAA), found in Trigonoceps occipitalis (White-headed vulture).